Reading from the N-terminus, the 61-residue chain is MGWLADYWWVVLLVLAGMLIGGVKALRRVDATSYLKNRPELPPHRDNNAQWDEEDDWPKKP.

The chain crosses the membrane as a helical span at residues 3 to 23 (WLADYWWVVLLVLAGMLIGGV). A compositionally biased stretch (basic and acidic residues) spans 37 to 47 (NRPELPPHRDN). The tract at residues 37-61 (NRPELPPHRDNNAQWDEEDDWPKKP) is disordered. The segment covering 51-61 (WDEEDDWPKKP) has biased composition (acidic residues).

The protein belongs to the UPF0370 family.

The protein localises to the cell membrane. In Sodalis glossinidius (strain morsitans), this protein is UPF0370 protein SG1720.